A 382-amino-acid polypeptide reads, in one-letter code: Alcohol dehydrogenase 1 (382 aa).

Residues C49, T51, H71, C101, C104, C107, C115, and C179 each contribute to the Zn(2+) site. Residues T51 and H71 each coordinate an alcohol. Residue T51 coordinates NAD(+). NAD(+) is bound by residues 204-209 (GLGAVG), D228, R233, T275, V298, 298-300 (VGV), F325, and R375.

This sequence belongs to the zinc-containing alcohol dehydrogenase family. In terms of assembly, homodimer. Zn(2+) is required as a cofactor.

The protein resides in the cytoplasm. It catalyses the reaction a primary alcohol + NAD(+) = an aldehyde + NADH + H(+). The catalysed reaction is a secondary alcohol + NAD(+) = a ketone + NADH + H(+). This protein is responsible for the conversion of alcohols to aldehydes in plants and is important for NAD metabolism during anaerobic respiration. The chain is Alcohol dehydrogenase 1 (ADH1) from Petunia hybrida (Petunia).